The chain runs to 338 residues: MKEQLDGLLQSALKEIDGAGSEEALQELRIKYLGKKGALTAVMKGLGALSAEERPVVGQLANTVKDQLEAHLDETLAQVRDASKRERLQRERLDVTLPGRRLPHGTKHPITLVIEEISEIFAGLGFRVAEGPEVELDFYNFEALNFPKDHPARDMQDTFFVDDSILLRTHTSPVQVRTMLKHAPPVRIISPGTVYRCDSDATHSPMFHQIEGLMVDTGVTFGDLKGILTNFVNQYFGKGIGVRLRPSFFPFTEPSAEVDIACVMCKGKGCRVCKESGWLEILGAGMIDPEVYRHVGYDPETISGFAFGMGVERVAMLKYGIGDLRLFFDNDVRFLQQF.

Residue E253 participates in Mg(2+) binding.

Belongs to the class-II aminoacyl-tRNA synthetase family. Phe-tRNA synthetase alpha subunit type 1 subfamily. Tetramer of two alpha and two beta subunits. Mg(2+) serves as cofactor.

The protein localises to the cytoplasm. It catalyses the reaction tRNA(Phe) + L-phenylalanine + ATP = L-phenylalanyl-tRNA(Phe) + AMP + diphosphate + H(+). The chain is Phenylalanine--tRNA ligase alpha subunit from Geobacter metallireducens (strain ATCC 53774 / DSM 7210 / GS-15).